Consider the following 398-residue polypeptide: MASMTGGQQMGTNQGKGVVAAGDKLALFLKVFGGEVLTAFARTSVTTSRHMVRSISSGKSAQFPVLGRTQAAYLAPGENLDDKRKDIKHTEKVITIDGLLTADVLIYDIEDAMNHYDVRSEYTSQLGESLAMAADGAVLAEIAGLCNVESKYNENIEGLGTATVIETTQNKAALTDQVALGKEIIAALTKARAALTKNYVPAADRVFYCDPDSYSAILAALMPNAANYAALIDPEKGSIRNVMGFEVVEVPHLTAGGAGTAREGTTGQKHVFPANKGEGNVKVAKDNVIGLFMHRSAVGTVKLRDLALERARRANFQADQIIAKYAMGHGGLRPEAAGAVVFQSGVMLGVASTVAASPEEASVTSTEETLTPAQEAARTRAANKARKEAELAAATAEQ.

The interval 359–398 (EEASVTSTEETLTPAQEAARTRAANKARKEAELAAATAEQ) is disordered. Residues 362 to 372 (SVTSTEETLTP) are compositionally biased toward polar residues. A compositionally biased stretch (low complexity) spans 373 to 382 (AQEAARTRAA).

It belongs to the T7virus minor capsid protein family. In terms of assembly, interacts with the connector protein and the major capsid protein.

It localises to the virion. Its function is as follows. Assembles with the major capsid protein to form an icosahedral capsid with a T=7 symmetry, about 60 nm in diameter, and consisting of 415 capsid proteins. The major and minor capsid proteins are incorporated into the capsid in about a 90/10 ratio respectively. Once the capsid formed, encapsidates one single copy of the viral genome. The protein is Minor capsid protein of Escherichia coli (Bacteriophage T7).